Reading from the N-terminus, the 522-residue chain is Protein disulfide-isomerase (522 aa).

The segment at residues 1-28 (MKFSAGAVLSWSSLLLASSVFAQQEAVA) is a signal peptide (or 22). In terms of domain architecture, Thioredoxin 1 spans 29-141 (PEDSAVVKLA…VQFMIKQSQP (113 aa)). Residues Cys61 and Cys64 each act as nucleophile in the active site. Cys61 and Cys64 form a disulfide bridge. Asn82, Asn117, Asn155, and Asn174 each carry an N-linked (GlcNAc...) asparagine glycan. Positions 356 to 485 (FLKGDASPIV…LFDFIKENGH (130 aa)) constitute a Thioredoxin 2 domain. Residues Cys406 and Cys409 each act as nucleophile in the active site. Residues Cys406 and Cys409 are joined by a disulfide bond. The N-linked (GlcNAc...) asparagine glycan is linked to Asn425. Positions 497-522 (AQEKAAEEADADAELADEEDAIHDEL) are disordered. Acidic residues predominate over residues 504 to 522 (EADADAELADEEDAIHDEL). The Prevents secretion from ER signature appears at 519-522 (HDEL).

The protein belongs to the protein disulfide isomerase family. In terms of assembly, interacts with EPS1, KAR2 and MNL1. In terms of processing, the N-terminus is blocked.

It localises to the endoplasmic reticulum lumen. It catalyses the reaction Catalyzes the rearrangement of -S-S- bonds in proteins.. Its function is as follows. Protein disulfide isomerase of ER lumen required for formation of disulfide bonds in secretory and cell-surface proteins and which unscrambles non-native disulfide bonds. Forms a complex with MNL1 to process unfolded protein-bound Man8GlcNAc2 oligosaccharides to Man7GlcNAc2, promoting degradation in unfolded protein response. This Saccharomyces cerevisiae (strain ATCC 204508 / S288c) (Baker's yeast) protein is Protein disulfide-isomerase (PDI1).